Reading from the N-terminus, the 437-residue chain is tRNA(Ile)-lysidine synthase (437 aa).

22–27 provides a ligand contact to ATP; it reads SGGLDS.

This sequence belongs to the tRNA(Ile)-lysidine synthase family.

The protein localises to the cytoplasm. It catalyses the reaction cytidine(34) in tRNA(Ile2) + L-lysine + ATP = lysidine(34) in tRNA(Ile2) + AMP + diphosphate + H(+). Ligates lysine onto the cytidine present at position 34 of the AUA codon-specific tRNA(Ile) that contains the anticodon CAU, in an ATP-dependent manner. Cytidine is converted to lysidine, thus changing the amino acid specificity of the tRNA from methionine to isoleucine. The polypeptide is tRNA(Ile)-lysidine synthase (Xylella fastidiosa (strain Temecula1 / ATCC 700964)).